The following is a 502-amino-acid chain: Regulator of hypoxia-inducible factor 1 (502 aa).

11 helical membrane-spanning segments follow: residues 54–74 (LLAW…VFSC), 92–112 (LDVL…NHTG), 138–158 (IFGA…VLSG), 188–208 (LAPS…NALL), 241–261 (MGYL…PIFL), 272–292 (MALT…YCTA), 335–355 (GPFL…YIMV), 367–387 (LIVA…PNAG), 396–416 (TAVF…ALYF), 437–457 (AYLL…LQAA), and 465–485 (LVLP…YLFI).

Expressed in intestine, some sensory neurons in the head, body wall muscles and socket cells.

The protein localises to the endoplasmic reticulum membrane. Functionally, involved in the response to variation in environmental oxygen levels by inhibiting hif-1-mediated gene transcription in a vhl-1-independent manner. Plays a role in susceptibility to killing mediated by P.aeruginosa and by pore-forming toxins produced by B.thuringiensis. Probably by preventing hif-1 transcriptional activity, regulates behavioral responses, such as locomotion speed following acute reoxygenation. Plays a role in normal egg-laying probably by regulating spermatogenesis and in body morphogenesis. This chain is Regulator of hypoxia-inducible factor 1, found in Caenorhabditis elegans.